The chain runs to 493 residues: UDP-glucose 6-dehydrogenase (493 aa).

NAD(+) contacts are provided by residues 11–16 (GAGYVG), Asp36, Arg41, and 89–93 (VNTPT). A disordered region spans residues 88-110 (SVNTPTKTYGMGKGRAADLKYIE). Residue Lys107 is modified to N6-acetyllysine. Residues 129–135 (KSTVPVR) are allosteric switch region. Residue 130 to 132 (STV) coordinates NAD(+). The active-site Proton donor/acceptor is Glu161. Substrate contacts are provided by residues 161–165 (EFLAE), 220–224 (KLAAN), Arg260, and 267–273 (KASVGFG). Position 165 (Glu165) interacts with NAD(+). Residue Lys220 is the Proton donor/acceptor of the active site. Cys276 functions as the Nucleophile in the catalytic mechanism. Residue 276–279 (CFQK) participates in NAD(+) binding. The tract at residues 321-325 (SLFNT) is important for formation of active hexamer structure. 338-339 (FK) contributes to the substrate binding site. Arg346 contributes to the NAD(+) binding site. Arg442 is a binding site for substrate. The tract at residues 466–493 (VSSKRIPYTPGEIPKFSLQDPPNKKPKV) is disordered. At Thr474 the chain carries Phosphothreonine.

The protein belongs to the UDP-glucose/GDP-mannose dehydrogenase family. In terms of assembly, homohexamer.

It catalyses the reaction UDP-alpha-D-glucose + 2 NAD(+) + H2O = UDP-alpha-D-glucuronate + 2 NADH + 3 H(+). Its pathway is nucleotide-sugar biosynthesis; UDP-alpha-D-glucuronate biosynthesis; UDP-alpha-D-glucuronate from UDP-alpha-D-glucose: step 1/1. With respect to regulation, UDP-alpha-D-xylose (UDX) acts as a feedback inhibitor. It binds at the same site as the substrate, but functions as allosteric inhibitor by triggering a conformation change that disrupts the active hexameric ring structure and gives rise to an inactive, horseshoe-shaped hexamer. Catalyzes the formation of UDP-alpha-D-glucuronate, a constituent of complex glycosaminoglycans. Required for the biosynthesis of chondroitin sulfate and heparan sulfate. Required for embryonic development via its role in the biosynthesis of glycosaminoglycans. Required for proper brain and neuronal development. The chain is UDP-glucose 6-dehydrogenase (Ugdh) from Mus musculus (Mouse).